The primary structure comprises 444 residues: MTRKYFGTDGIRGTVGQSPITPDFALRLAHAVGRVLRRTQERPTVLIGKDTRISGYMLESALESGFNSAGVDVVLLGPLPTPGVAYLTRAQRASLGVVISASHNPYPDNGIKFFSAQGTKLPDAWEEEVEAALEQPPVWADSASLGKTRRLDDAAGRYIEFCKSTFANDLTLRGLKIVVDAAHGAAYHIAPKVFHELGAEVLAIGCAPDGLNINHQVGATHPDALVRAVRANHADYGIALDGDADRVQMVDAAGRLFNGDELLYVMVAARLARDEHVPGVVGTLMTNMAVEEALQRRGVKFMRAKVGDRYVLEELQRQHWLLGGEGSGHLLALDRHTTGDGLISALQVLQACVRSGKTLAQLLADVPLFPQVLLNVRLNPGQDWKTNPVLADAIRDAEAELGAHGRVLVRASGTEPLLRVMVEAREAEQANRCAQRIADAARAG.

The Phosphoserine intermediate role is filled by serine 102. Residues serine 102, aspartate 241, aspartate 243, and aspartate 245 each contribute to the Mg(2+) site. Residue serine 102 is modified to Phosphoserine.

Belongs to the phosphohexose mutase family. The cofactor is Mg(2+). Activated by phosphorylation.

The enzyme catalyses alpha-D-glucosamine 1-phosphate = D-glucosamine 6-phosphate. Catalyzes the conversion of glucosamine-6-phosphate to glucosamine-1-phosphate. In Acidovorax ebreus (strain TPSY) (Diaphorobacter sp. (strain TPSY)), this protein is Phosphoglucosamine mutase.